The following is a 171-amino-acid chain: Mitochondrial import inner membrane translocase subunit Tim17-A (171 aa).

Cysteines 9 and 78 form a disulfide. A run of 3 helical transmembrane segments spans residues 17 to 37 (CGGAFTMGTIGGGIFQAFKGF), 63 to 77 (GGSFAVWGGLFSTID), and 113 to 133 (VGSAAMGGILLALIEGAGILL). Residues 147–171 (FAEDHSQLPSSQLPSSPFGDYRQYQ) are disordered. The segment covering 153–163 (QLPSSQLPSSP) has biased composition (low complexity).

This sequence belongs to the Tim17/Tim22/Tim23 family. As to quaternary structure, component of the TIM23 complex at least composed of TIMM23, TIMM17 (TIMM17A or TIMM17B) and TIMM50. The complex interacts with the TIMM44 component of the PAM complex and with DNAJC15. In terms of processing, degraded by YMEL1 downstream of the integrated stress response (ISR).

It is found in the mitochondrion inner membrane. Essential component of the TIM23 complex, a complex that mediates the translocation of transit peptide-containing proteins across the mitochondrial inner membrane. In Rattus norvegicus (Rat), this protein is Mitochondrial import inner membrane translocase subunit Tim17-A (Timm17a).